Reading from the N-terminus, the 98-residue chain is Protein PROLINE CONTENT ALTERNATIVE 22 (98 aa).

In terms of tissue distribution, mainly expressed in flowers, to a lower extent, in roots and, at very low levels, in leaves and stems.

Its subcellular location is the cytoplasm. Functionally, acts as an opponent to RZF1 during early seedling growth in term of proline accumulation in response to dehydration and abscisic acid (ABA). Confers sensitivity to abiotic stresses such as ABA, drought and osmotic stress (e.g. mannitol treatment) by preventing proline accumulation and by reducing the expression of dehydration-inducible genes. Promotes the production of lipid peroxidation by drought stress thus leading to malondialdehyde (MDA) synthesis. Prevents pollen tube elongation. Necessary for RZF1 expression in seedlings. The protein is Protein PROLINE CONTENT ALTERNATIVE 22 of Arabidopsis thaliana (Mouse-ear cress).